Consider the following 251-residue polypeptide: Probable transcriptional regulatory protein Cgl1663/cg1872 (251 aa).

Residues 1-22 form a disordered region; that stretch reads MSGHSKWATTKHKKAANDAKRG.

The protein belongs to the TACO1 family.

The protein localises to the cytoplasm. The sequence is that of Probable transcriptional regulatory protein Cgl1663/cg1872 from Corynebacterium glutamicum (strain ATCC 13032 / DSM 20300 / JCM 1318 / BCRC 11384 / CCUG 27702 / LMG 3730 / NBRC 12168 / NCIMB 10025 / NRRL B-2784 / 534).